The following is a 209-amino-acid chain: Ribosomal RNA large subunit methyltransferase E (209 aa).

5 residues coordinate S-adenosyl-L-methionine: G63, W65, D83, D99, and D124. Residue K164 is the Proton acceptor of the active site.

The protein belongs to the class I-like SAM-binding methyltransferase superfamily. RNA methyltransferase RlmE family.

The protein localises to the cytoplasm. The catalysed reaction is uridine(2552) in 23S rRNA + S-adenosyl-L-methionine = 2'-O-methyluridine(2552) in 23S rRNA + S-adenosyl-L-homocysteine + H(+). Specifically methylates the uridine in position 2552 of 23S rRNA at the 2'-O position of the ribose in the fully assembled 50S ribosomal subunit. The sequence is that of Ribosomal RNA large subunit methyltransferase E from Aliivibrio fischeri (strain MJ11) (Vibrio fischeri).